Here is a 140-residue protein sequence, read N- to C-terminus: Nucleoside diphosphate kinase (140 aa).

ATP-binding residues include Lys11, Phe59, Arg87, Thr93, Arg104, and Asn114. His117 serves as the catalytic Pros-phosphohistidine intermediate.

It belongs to the NDK family. Homotetramer. The cofactor is Mg(2+).

The protein resides in the cytoplasm. The catalysed reaction is a 2'-deoxyribonucleoside 5'-diphosphate + ATP = a 2'-deoxyribonucleoside 5'-triphosphate + ADP. The enzyme catalyses a ribonucleoside 5'-diphosphate + ATP = a ribonucleoside 5'-triphosphate + ADP. Its function is as follows. Major role in the synthesis of nucleoside triphosphates other than ATP. The ATP gamma phosphate is transferred to the NDP beta phosphate via a ping-pong mechanism, using a phosphorylated active-site intermediate. This chain is Nucleoside diphosphate kinase, found in Rickettsia canadensis (strain McKiel).